The following is a 431-amino-acid chain: Enolase (431 aa).

Residue Gln-163 coordinates (2R)-2-phosphoglycerate. Catalysis depends on Glu-205, which acts as the Proton donor. 3 residues coordinate Mg(2+): Asp-242, Glu-288, and Asp-315. Lys-340, Arg-369, Ser-370, and Lys-391 together coordinate (2R)-2-phosphoglycerate. Lys-340 (proton acceptor) is an active-site residue.

It belongs to the enolase family. The cofactor is Mg(2+).

The protein localises to the cytoplasm. It localises to the secreted. Its subcellular location is the cell surface. The catalysed reaction is (2R)-2-phosphoglycerate = phosphoenolpyruvate + H2O. Its pathway is carbohydrate degradation; glycolysis; pyruvate from D-glyceraldehyde 3-phosphate: step 4/5. Catalyzes the reversible conversion of 2-phosphoglycerate (2-PG) into phosphoenolpyruvate (PEP). It is essential for the degradation of carbohydrates via glycolysis. The chain is Enolase from Bacillus cereus (strain AH187).